Consider the following 1337-residue polypeptide: C-Jun-amino-terminal kinase-interacting protein 3 (1337 aa).

One can recognise an RH1 domain in the interval 12 to 100; that stretch reads VVVYQDDYCS…LTQYEREKAL (89 aa). The tract at residues 50-80 is kinesin-binding domain (KBD); essential for its function in axon elongation; that stretch reads EVVKELMPLVVNVLENLDSVLSENQEHEVEL. The stretch at 58 to 177 forms a coiled coil; it reads LVVNVLENLD…HTEMIQTYVE (120 aa). Disordered regions lie at residues 183–211 and 245–285; these read KMQQ…SLNV and SSSY…PSAA. The span at 184 to 198 shows a compositional bias: polar residues; the sequence is MQQVGGSGQTESSLP. The segment at 210–226 is JNK-binding domain (JBD); essential for its function in axon elongation; it reads NVFPLADGMVRAQMGGK. Residues 261–270 are compositionally biased toward low complexity; sequence SSAAATPSTT. A phosphothreonine; by MAPK mark is found at Thr-266, Thr-276, and Thr-287. Residues 271–282 are compositionally biased toward polar residues; sequence GTKSNTPTSSVP. Residues Ser-315 and Ser-365 each carry the phosphoserine; by ROCK1 modification. Ser-366 carries the post-translational modification Phosphoserine. The leucine zipper-like domain (LZ); essential for its function in axon elongation stretch occupies residues 424–459; it reads LLLENSQLLETKNALNVVKNDLIAKVDQLSGEQEVL. The stretch at 437 to 555 forms a coiled coil; sequence ALNVVKNDLI…LQEAVRWTEM (119 aa). Positions 459–515 are interaction with NTRK2; it reads LKGELEAAKQAKVKLENRIKELEEELKRVKSEAVTARREPREEVEDVSSYLCTELDK. Residues 521-595 form the RH2 domain; it reads RRRFTRVEMA…SPPPAKRSYP (75 aa). A Phosphoserine modification is found at Ser-603. The disordered stretch occupies residues 633–655; sequence DDCTSSARREQKREQYRQVREHV. A compositionally biased stretch (basic and acidic residues) spans 639 to 655; it reads ARREQKREQYRQVREHV. Ser-677 is subject to Phosphoserine. Disordered regions lie at residues 719-772 and 859-966; these read WKPH…ATSS and PRSN…TTTS. Over residues 739-765 the composition is skewed to basic and acidic residues; that stretch reads LTCDREGEGEPKSTHPSPEKKKAKETP. Composition is skewed to polar residues over residues 879-892 and 941-952; these read VATT…PSQS and ENGSESNGTIVQ.

It belongs to the JIP scaffold family. In terms of assembly, forms homo- or heterooligomeric complexes. The central region of MAPK8IP3 interacts with the C-terminal of MAPK8IP2 but not MAPK8IP1. Binds specific components of the JNK signaling pathway namely MAPK8/JNK1, MAPK9/JNK2 and MAPK10/JNK3 to the N-terminal region, MAP2K4/MKK4 and MAP2K7/MKK7 to the central region and MAP3K11 to the C-terminal region. Binds the TPR motif-containing C-terminal of kinesin light chain, KLC1. Pre-assembled MAPK8IP1 scaffolding complexes are then transported as a cargo of kinesin, to the required subcellular location. Interacts with ROCK1 and this interaction is enhanced by ultraviolet-B (UVB) radiation. Interacts with SH3RF2. Interacts with NTRK2/TRKB and NTRK3/TRKC. Post-translationally, phosphorylation by ROCK1 is crucial for the recruitment of JNK. As to expression, highly expressed throughout many regions of the brain and at lower levels in the heart, liver, lung, testes and kidney. All isoforms have been identified in the brain, isoform 1a is also expressed in the spleen and lung.

The protein resides in the cytoplasm. It is found in the golgi apparatus. It localises to the cytoplasmic vesicle. The protein localises to the cell projection. Its subcellular location is the growth cone. The protein resides in the axon. It is found in the dendrite. It localises to the perinuclear region. In terms of biological role, the JNK-interacting protein (JIP) group of scaffold proteins selectively mediates JNK signaling by aggregating specific components of the MAPK cascade to form a functional JNK signaling module. May function as a regulator of vesicle transport, through interactions with the JNK-signaling components and motor proteins. Promotes neuronal axon elongation in a kinesin- and JNK-dependent manner. Activates cofilin at axon tips via local activation of JNK, thereby regulating filopodial dynamics and enhancing axon elongation. Its binding to kinesin heavy chains (KHC), promotes kinesin-1 motility along microtubules and is essential for axon elongation and regeneration. Regulates cortical neuronal migration by mediating NTRK2/TRKB anterograde axonal transport during brain development. Acts as an adapter that bridges the interaction between NTRK2/TRKB and KLC1 and drives NTRK2/TRKB axonal but not dendritic anterograde transport, which is essential for subsequent BDNF-triggered signaling and filopodia formation. In Mus musculus (Mouse), this protein is C-Jun-amino-terminal kinase-interacting protein 3 (Mapk8ip3).